The following is a 908-amino-acid chain: Protein translocase subunit SecA (908 aa).

ATP contacts are provided by residues Gln-87, 105 to 109, and Asp-512; that span reads GEGKT. Residues 865-908 are disordered; the sequence is GGDDGSDEMMAHTPMIRDGDKVGRNDPCPCGSGRKYKQCHGKLS. The span at 879-888 shows a compositional bias: basic and acidic residues; the sequence is MIRDGDKVGR. Zn(2+) contacts are provided by Cys-892, Cys-894, Cys-903, and His-904. The span at 898–908 shows a compositional bias: basic residues; it reads RKYKQCHGKLS.

This sequence belongs to the SecA family. As to quaternary structure, monomer and homodimer. Part of the essential Sec protein translocation apparatus which comprises SecA, SecYEG and auxiliary proteins SecDF-YajC and YidC. Zn(2+) is required as a cofactor.

It is found in the cell inner membrane. The protein localises to the cytoplasm. The enzyme catalyses ATP + H2O + cellular proteinSide 1 = ADP + phosphate + cellular proteinSide 2.. Its function is as follows. Part of the Sec protein translocase complex. Interacts with the SecYEG preprotein conducting channel. Has a central role in coupling the hydrolysis of ATP to the transfer of proteins into and across the cell membrane, serving both as a receptor for the preprotein-SecB complex and as an ATP-driven molecular motor driving the stepwise translocation of polypeptide chains across the membrane. The sequence is that of Protein translocase subunit SecA from Shewanella sp. (strain MR-7).